Reading from the N-terminus, the 342-residue chain is L-lysine 2,3-aminomutase (342 aa).

The Radical SAM core domain occupies 106–329; sequence HKYQNRALLL…PRLAREIGGE (224 aa). 3 residues coordinate [4Fe-4S] cluster: C120, C124, and C127. Position 332 is an N6-(pyridoxal phosphate)lysine (K332).

It belongs to the radical SAM superfamily. KamA family. Requires [4Fe-4S] cluster as cofactor. Pyridoxal 5'-phosphate serves as cofactor.

It catalyses the reaction L-lysine = D-beta-lysine. With EpmA is involved in the beta-lysylation step of the post-translational modification of translation elongation factor P (EF-P) on 'Lys-34'. EpmB appears to act before EpmA. Displays lysine 2,3-aminomutase activity, producing (R)-beta-lysine from (S)-alpha-lysine (L-lysine). This is L-lysine 2,3-aminomutase (epmB) from Salmonella typhimurium (strain LT2 / SGSC1412 / ATCC 700720).